Here is a 355-residue protein sequence, read N- to C-terminus: SH3 domain-containing protein Dlish (355 aa).

3 consecutive SH3 domains span residues 57-117 (SPDS…PCNT), 183-243 (EPSG…PADS), and 287-352 (YHGT…PPAM).

In terms of assembly, interacts with dachs (via C-terminus); the interaction is direct. Interacts (via N-terminus including SH3 domain 1) with palmitoyltransferase app; this leads to palmitoylation of Dlish by app. Also interacts with dco, ft, ft-regulated E3 ubiquitin ligase Fbxl7, F-box protein slmb and SCF E3 ubiquitin-protein ligase complex component Cul1. Post-translationally, palmitoylated by app.

The protein resides in the cytoplasm. It is found in the cell cortex. Its function is as follows. Required for the apical cell cortex localization, total cellular level and full activity of dachs. This Drosophila melanogaster (Fruit fly) protein is SH3 domain-containing protein Dlish.